The sequence spans 703 residues: Probable ATP-dependent RNA helicase DHX35 (703 aa).

Residues 64–229 enclose the Helicase ATP-binding domain; the sequence is LYLIENYQTV…FNQNETSDPA (166 aa). Residue 77–84 participates in ATP binding; it reads GETGCGKS. The short motif at 176 to 179 is the DEAH box element; that stretch reads DEAH. One can recognise a Helicase C-terminal domain in the interval 261–438; the sequence is TVETVVKIHQ…PVILQLKALG (178 aa).

Belongs to the DEAD box helicase family. DEAH subfamily. In terms of assembly, identified in the spliceosome C complex.

It carries out the reaction ATP + H2O = ADP + phosphate + H(+). May be involved in pre-mRNA splicing. The protein is Probable ATP-dependent RNA helicase DHX35 (DHX35) of Homo sapiens (Human).